The following is a 356-amino-acid chain: Butyrate kinase (356 aa).

Belongs to the acetokinase family.

The protein localises to the cytoplasm. It carries out the reaction butanoate + ATP = butanoyl phosphate + ADP. It functions in the pathway lipid metabolism; butanoate metabolism. Its function is as follows. Catalyzes the conversion of butyryl-CoA through butyryl phosphate to butyrate. This Clostridium tetani (strain Massachusetts / E88) protein is Butyrate kinase.